We begin with the raw amino-acid sequence, 79 residues long: RNA-binding protein Hfq (79 aa).

A Sm domain is found at 10 to 69; that stretch reads DPFLNALRKEHVPVSIYLVNGIKLQGNIESFDQYVVLLRNTVTQMVYKHAISTVVPARPV.

The protein belongs to the Hfq family. As to quaternary structure, homohexamer.

Its function is as follows. RNA chaperone that binds small regulatory RNA (sRNAs) and mRNAs to facilitate mRNA translational regulation in response to envelope stress, environmental stress and changes in metabolite concentrations. Also binds with high specificity to tRNAs. This Burkholderia mallei (strain ATCC 23344) protein is RNA-binding protein Hfq.